The primary structure comprises 336 residues: HTH-type transcriptional regulator CdhR (336 aa).

In terms of domain architecture, HTH araC/xylS-type spans 213 to 311 (VQVIGEMERH…AASPSQDRAV (99 aa)). 2 consecutive DNA-binding regions (H-T-H motif) follow at residues 230–251 (LELAERIQVTRRQLERLFRVHL) and 278–301 (VLQVSLACGFESPSYFSRSYRARF). Positions 305-336 (PSQDRAVLPLKAPAATPPGAPAGHRTPRAERG) are disordered.

In terms of biological role, induces the transcription of the PA5384-PA5388 operon in response to carnitine. This operon is involved in the degradation of L-carnitine, and allows P.aeruginosa to grow on L-carnitine as the sole source of carbon and nitrogen. The sequence is that of HTH-type transcriptional regulator CdhR (cdhR) from Pseudomonas aeruginosa (strain ATCC 15692 / DSM 22644 / CIP 104116 / JCM 14847 / LMG 12228 / 1C / PRS 101 / PAO1).